A 223-amino-acid chain; its full sequence is Protein-disulfide oxidoreductase DsbI (223 aa).

A helical membrane pass occupies residues 26–46; the sequence is LLWLLMAVAMGALIILAHSFF. The cysteines at positions 55 and 58 are disulfide-linked. Helical transmembrane passes span 59–78 and 82–102; these read VYIR…AAIN and IILK…GLKF. The cysteines at positions 127 and 153 are disulfide-linked. Residues 198–218 traverse the membrane as a helical segment; it reads CMLAFGMCLVLLVIMSGAWAL.

It belongs to the DsbB family. DsbI subfamily. As to quaternary structure, interacts with DsbL.

The protein resides in the cell inner membrane. In terms of biological role, required for disulfide bond formation in some proteins. Part of a redox system composed of DsbI and DsbL that mediates formation of an essential disulfide bond in AssT. This is Protein-disulfide oxidoreductase DsbI from Escherichia coli O1:K1 / APEC.